Reading from the N-terminus, the 87-residue chain is Apoptosis inducing factor BLCAP B (87 aa).

2 helical membrane-spanning segments follow: residues 19-39 (PALW…FLLE) and 43-63 (CTIC…SCWG).

This sequence belongs to the BLCAP family.

Its subcellular location is the cytoplasm. The protein resides in the nucleus. It is found in the membrane. Acts as a tumor suppressor; induces growth arrest at G(1)/S checkpoint and apoptosis via RB1-dependent and p53/TP53- and NF-kappa-B-independent mechanisms. Modulates expression of genes involved in the regulation of proliferation, cell cycle and apoptosis. The polypeptide is Apoptosis inducing factor BLCAP B (blcap-b) (Xenopus laevis (African clawed frog)).